The chain runs to 699 residues: Elongation factor G (699 aa).

Positions 8–288 (EDYRNFGIMA…AVVDYLPSPL (281 aa)) constitute a tr-type G domain. Residues 17-24 (AHIDAGKT), 86-90 (DTPGH), and 140-143 (NKMD) contribute to the GTP site.

Belongs to the TRAFAC class translation factor GTPase superfamily. Classic translation factor GTPase family. EF-G/EF-2 subfamily.

It localises to the cytoplasm. Functionally, catalyzes the GTP-dependent ribosomal translocation step during translation elongation. During this step, the ribosome changes from the pre-translocational (PRE) to the post-translocational (POST) state as the newly formed A-site-bound peptidyl-tRNA and P-site-bound deacylated tRNA move to the P and E sites, respectively. Catalyzes the coordinated movement of the two tRNA molecules, the mRNA and conformational changes in the ribosome. This is Elongation factor G from Rhizobium etli (strain CIAT 652).